We begin with the raw amino-acid sequence, 241 residues long: Leucyl/phenylalanyl-tRNA--protein transferase (241 aa).

It belongs to the L/F-transferase family.

It is found in the cytoplasm. It carries out the reaction N-terminal L-lysyl-[protein] + L-leucyl-tRNA(Leu) = N-terminal L-leucyl-L-lysyl-[protein] + tRNA(Leu) + H(+). The enzyme catalyses N-terminal L-arginyl-[protein] + L-leucyl-tRNA(Leu) = N-terminal L-leucyl-L-arginyl-[protein] + tRNA(Leu) + H(+). The catalysed reaction is L-phenylalanyl-tRNA(Phe) + an N-terminal L-alpha-aminoacyl-[protein] = an N-terminal L-phenylalanyl-L-alpha-aminoacyl-[protein] + tRNA(Phe). Functions in the N-end rule pathway of protein degradation where it conjugates Leu, Phe and, less efficiently, Met from aminoacyl-tRNAs to the N-termini of proteins containing an N-terminal arginine or lysine. The sequence is that of Leucyl/phenylalanyl-tRNA--protein transferase from Neisseria meningitidis serogroup C (strain 053442).